The following is a 125-amino-acid chain: MADLAKIEEQLSSLTLMQAAELVKILEEKWGVSAAAPVAVAAAGAAAPAAEAVAEKTEFEVVLTAAGDKKVEVIKVVKDITGLGLIEAKKLVDEAPKPIKSNVKKADADEIKGKLEAAGAKVELK.

The protein belongs to the bacterial ribosomal protein bL12 family. In terms of assembly, homodimer. Part of the ribosomal stalk of the 50S ribosomal subunit. Forms a multimeric L10(L12)X complex, where L10 forms an elongated spine to which 2 to 4 L12 dimers bind in a sequential fashion. Binds GTP-bound translation factors.

In terms of biological role, forms part of the ribosomal stalk which helps the ribosome interact with GTP-bound translation factors. Is thus essential for accurate translation. The sequence is that of Large ribosomal subunit protein bL12 from Rickettsia africae (strain ESF-5).